A 1146-amino-acid polypeptide reads, in one-letter code: Inositol hexakisphosphate and diphosphoinositol-pentakisphosphate kinase (1146 aa).

The segment at 1–33 (MSGIKKEPIESDEVPQQETKNNLPSAPSEMSPL) is disordered. The segment covering 16–25 (QQETKNNLPS) has biased composition (polar residues). Ser31, Ser54, and Ser77 each carry phosphoserine. The disordered stretch occupies residues 93–185 (TALGNGNNTN…STSHPKPRLP (93 aa)). The span at 96–106 (GNGNNTNTVTT) shows a compositional bias: low complexity. Residues 110–120 (KKADSESKSEA) show a composition bias toward basic and acidic residues. Residues 125–144 (LSNSNIVNDADNINSISKTG) show a composition bias toward polar residues. The segment covering 164–178 (SVPTSSASSRKSSTS) has biased composition (low complexity). 197–198 (AK) is a binding site for substrate. ATP is bound by residues Arg278, Lys351, His358, Arg377, 402-405 (EQFM), and 412-414 (DVK). Residue 377 to 378 (RK) participates in substrate binding. Substrate-binding residues include Lys414 and Arg428. ATP-binding positions include Ser430, Asp475, and 487 to 489 (DVN). A substrate-binding site is contributed by 492–495 (SFVK). The tract at residues 530–597 (REEKEQKWVF…VLQALRIALD (68 aa)) is polyphosphoinositide-binding domain. Phosphoserine occurs at positions 895 and 1107. The interval 1106–1146 (TSPNLSFQKRKTRRKSVSVEKLKRPASSGSSSSTSVNKTLD) is disordered.

The protein belongs to the histidine acid phosphatase family. VIP1 subfamily.

The protein resides in the cytoplasm. It localises to the cytoskeleton. It catalyses the reaction 1D-myo-inositol hexakisphosphate + ATP = 1-diphospho-1D-myo-inositol 2,3,4,5,6-pentakisphosphate + ADP. The catalysed reaction is 5-diphospho-1D-myo-inositol 1,2,3,4,6-pentakisphosphate + ATP + H(+) = 1,5-bis(diphospho)-1D-myo-inositol 2,3,4,6-tetrakisphosphate + ADP. Its function is as follows. Bifunctional inositol kinase that acts in concert with the IP6K kinases to synthesize the diphosphate group-containing inositol pyrophosphates diphosphoinositol pentakisphosphate, PP-InsP5, and bis-diphosphoinositol tetrakisphosphate, (PP)2-InsP4. Phosphorylates inositol hexakisphosphate (InsP6) at position 1 to produce PP-InsP5 which is in turn phosphorylated by IP6Ks to produce (PP)2-InsP4. Alternatively, phosphorylates PP-InsP5 at position 1, produced by IP6Ks from InsP6, to produce (PP)2-InsP4. Required for maintaining cellular integrity, normal growth and interactions with the ARP complex. Acts as a regulator of the PHO80-PHO85 cyclin/cyclin-dependent kinase (CDK) complex, thereby regulating signaling of phosphate availability. Required for the function of the cortical actin cytoskeleton, possibly by participating in correct F-actin localization and ensuring polarized growth. Regulates polarized growth and modulates interphase microtubule cytoskeleton. Regulates microtubule dynamics without the requirement of microtubule plus-end tracking protein Mal3. Required for growth zone selection. In Saccharomyces cerevisiae (strain ATCC 204508 / S288c) (Baker's yeast), this protein is Inositol hexakisphosphate and diphosphoinositol-pentakisphosphate kinase.